A 101-amino-acid chain; its full sequence is NAD(P)H-quinone oxidoreductase subunit 4L, chloroplastic (101 aa).

The next 3 membrane-spanning stretches (helical) occupy residues 2–22, 32–52, and 61–81; these read ILEH…YGLI, MCLE…SDFF, and IFSI…PAIL.

The protein belongs to the complex I subunit 4L family. As to quaternary structure, NDH is composed of at least 16 different subunits, 5 of which are encoded in the nucleus.

The protein localises to the plastid. The protein resides in the chloroplast thylakoid membrane. It carries out the reaction a plastoquinone + NADH + (n+1) H(+)(in) = a plastoquinol + NAD(+) + n H(+)(out). It catalyses the reaction a plastoquinone + NADPH + (n+1) H(+)(in) = a plastoquinol + NADP(+) + n H(+)(out). Functionally, NDH shuttles electrons from NAD(P)H:plastoquinone, via FMN and iron-sulfur (Fe-S) centers, to quinones in the photosynthetic chain and possibly in a chloroplast respiratory chain. The immediate electron acceptor for the enzyme in this species is believed to be plastoquinone. Couples the redox reaction to proton translocation, and thus conserves the redox energy in a proton gradient. The protein is NAD(P)H-quinone oxidoreductase subunit 4L, chloroplastic of Platanus occidentalis (Sycamore).